The primary structure comprises 709 residues: Nicastrin (709 aa).

The signal sequence occupies residues Met1 to Gly33. Topologically, residues Asn34–Glu669 are extracellular. 2 N-linked (GlcNAc...) asparagine glycosylation sites follow: Asn45 and Asn55. Cystine bridges form between Cys50–Cys62 and Cys140–Cys159. Residues Asn187, Asn200, and Asn204 are each glycosylated (N-linked (GlcNAc...) asparagine). 2 disulfide bridges follow: Cys195/Cys213 and Cys230/Cys248. Residues Asn264, Asn387, Asn417, Asn435, Asn464, Asn506, Asn530, Asn562, Asn573, Asn580, and Asn612 are each glycosylated (N-linked (GlcNAc...) asparagine). A disulfide bridge connects residues Cys586 and Cys620. A helical transmembrane segment spans residues Leu670 to Ile690. Residues Asn691 to Tyr709 lie on the Cytoplasmic side of the membrane.

It belongs to the nicastrin family. As to quaternary structure, component of the gamma-secretase complex. The functional gamma-secretase complex is composed of at least four polypeptides: a presenilin homodimer (PSEN1 or PSEN2), nicastrin (NCSTN), APH1 (APH1A or APH1B) and PSENEN/PEN2. Binds to proteolytic processed C-terminal fragments C83 and C99 of the amyloid precursor protein (APP). Interacts with PSEN1 and PSEN2. In terms of processing, N-glycosylated. In terms of tissue distribution, detected in brain (at protein level). Widely expressed.

It is found in the membrane. It localises to the cytoplasmic vesicle membrane. The protein localises to the melanosome. In terms of biological role, essential subunit of the gamma-secretase complex, an endoprotease complex that catalyzes the intramembrane cleavage of integral membrane proteins such as Notch receptors and APP (amyloid-beta precursor protein). The gamma-secretase complex plays a role in Notch and Wnt signaling cascades and regulation of downstream processes via its role in processing key regulatory proteins, and by regulating cytosolic CTNNB1 levels. This Homo sapiens (Human) protein is Nicastrin (NCSTN).